A 1221-amino-acid polypeptide reads, in one-letter code: RNA exonuclease 1 homolog (1221 aa).

The span at 37 to 46 (RGSGAPGDGG) shows a compositional bias: gly residues. Residues 37–75 (RGSGAPGDGGEAPPAAGLGYDPYNPELPKPPAQRENGTL) form a disordered region. Positions 86 to 115 (LELELVNQAIEAVRSEVELEQRRYRELLET) form a coiled coil. The tract at residues 116 to 598 (TREHRSAEAP…STSSAGADVD (483 aa)) is disordered. Residue R191 is modified to Omega-N-methylarginine. Residues S287, S289, and S358 each carry the phosphoserine modification. Low complexity predominate over residues 357-369 (ASPAQVQSSQDGG). Positions 393–417 (AQGKDKTKDKGRGRPVEKPRADKKG) are enriched in basic and acidic residues. S459, S499, and S526 each carry phosphoserine. Basic and acidic residues predominate over residues 492–501 (LVERKARSLD). The interval 498–577 (RSLDEGASQD…KRLKASPPPS (80 aa)) is interaction with ELOA. Residues 580-593 (PSSSSSSSSSTSSA) show a composition bias toward low complexity. At S610 the chain carries Phosphoserine. Disordered regions lie at residues 619–692 (IFNE…TAQE) and 735–775 (HIPN…TRTL). Residues 627–648 (KTEDRGRLARQPPKEEKSEEKG) are compositionally biased toward basic and acidic residues. A Phosphoserine modification is found at S914. The Exonuclease domain maps to 1060–1209 (IYALDCEMSY…EDAGACMHLV (150 aa)).

The protein belongs to the REXO1/REXO3 family. In terms of assembly, interacts with TCEA2 and ELOA. In terms of tissue distribution, ubiquitously expressed.

Its subcellular location is the nucleus. In terms of biological role, seems to have no detectable effect on transcription elongation in vitro. The chain is RNA exonuclease 1 homolog (REXO1) from Homo sapiens (Human).